The sequence spans 288 residues: Fructose-bisphosphate aldolase (288 aa).

Serine 49 serves as a coordination point for D-glyceraldehyde 3-phosphate. Aspartate 84 (proton donor) is an active-site residue. Residues histidine 85, aspartate 105, glutamate 135, and histidine 177 each contribute to the Zn(2+) site. Glycine 178 provides a ligand contact to dihydroxyacetone phosphate. Histidine 206 contacts Zn(2+). Dihydroxyacetone phosphate is bound by residues 207–209 (GGS) and 228–231 (NINT).

This sequence belongs to the class II fructose-bisphosphate aldolase family. Homodimer. Zn(2+) is required as a cofactor.

The catalysed reaction is beta-D-fructose 1,6-bisphosphate = D-glyceraldehyde 3-phosphate + dihydroxyacetone phosphate. It functions in the pathway carbohydrate degradation; glycolysis; D-glyceraldehyde 3-phosphate and glycerone phosphate from D-glucose: step 4/4. Functionally, catalyzes the aldol condensation of dihydroxyacetone phosphate (DHAP or glycerone-phosphate) with glyceraldehyde 3-phosphate (G3P) to form fructose 1,6-bisphosphate (FBP) in gluconeogenesis and the reverse reaction in glycolysis. The polypeptide is Fructose-bisphosphate aldolase (fba) (Mycoplasma genitalium (strain ATCC 33530 / DSM 19775 / NCTC 10195 / G37) (Mycoplasmoides genitalium)).